A 328-amino-acid polypeptide reads, in one-letter code: DNA polymerase III subunit delta' (328 aa).

As to quaternary structure, DNA polymerase III contains a core (composed of alpha, epsilon and theta chains) that associates with a tau subunit. This core dimerizes to form the POLIII' complex. PolIII' associates with the gamma complex (composed of gamma, delta, delta', psi and chi chains) and with the beta chain to form the complete DNA polymerase III complex.

It carries out the reaction DNA(n) + a 2'-deoxyribonucleoside 5'-triphosphate = DNA(n+1) + diphosphate. DNA polymerase III is a complex, multichain enzyme responsible for most of the replicative synthesis in bacteria. This DNA polymerase also exhibits 3' to 5' exonuclease activity. The polypeptide is DNA polymerase III subunit delta' (holB) (Buchnera aphidicola subsp. Schizaphis graminum (strain Sg)).